A 72-amino-acid chain; its full sequence is DNA gyrase inhibitor YacG (72 aa).

Positions 17, 20, 32, and 36 each coordinate Zn(2+). The disordered stretch occupies residues 52–72; it reads PGPEEDEMSYPPHSNDGNRSR.

The protein belongs to the DNA gyrase inhibitor YacG family. As to quaternary structure, interacts with GyrB. The cofactor is Zn(2+).

In terms of biological role, inhibits all the catalytic activities of DNA gyrase by preventing its interaction with DNA. Acts by binding directly to the C-terminal domain of GyrB, which probably disrupts DNA binding by the gyrase. The sequence is that of DNA gyrase inhibitor YacG from Methylorubrum extorquens (strain CM4 / NCIMB 13688) (Methylobacterium extorquens).